Reading from the N-terminus, the 482-residue chain is Rho GTPase-activating protein 15 (482 aa).

Phosphoserine is present on residues Ser51, Ser111, Ser205, Ser208, and Ser250. Residues 87–198 enclose the PH domain; sequence MVEKEGYLQK…WFHAIKNAID (112 aa). Residues 288–477 form the Rho-GAP domain; the sequence is SHLHTVCERE…FMLTEYDKIF (190 aa).

The protein localises to the cytoplasm. Its subcellular location is the membrane. Functionally, GTPase activator for the Rho-type GTPases by converting them to an inactive GDP-bound state. Has activity toward RAC1. Overexpression results in an increase in actin stress fibers and cell contraction. In Rattus norvegicus (Rat), this protein is Rho GTPase-activating protein 15 (Arhgap15).